A 1263-amino-acid chain; its full sequence is Multidrug resistance protein sirA (1263 aa).

The interval 1 to 21 (MAEPESEKPSSAQGGGLPSSD) is disordered. Transmembrane regions (helical) follow at residues 57-77 (LISA…ILFI), 104-124 (IALY…IFTN), 179-199 (KIGL…IGFV), and 206-226 (FILT…SGFM). An ABC transmembrane type-1 1 domain is found at 57-347 (LISAFFAAVS…VGPHLQAMSL (291 aa)). Residue Asn232 is glycosylated (N-linked (GlcNAc...) asparagine). Helical transmembrane passes span 284 to 304 (VMGW…GLAI) and 318 to 338 (VGAI…FGNV). Residues 380-625 (IEFRNVSHVY…EGLYQTFVRR (246 aa)) form the ABC transporter 1 domain. Asn384 carries N-linked (GlcNAc...) asparagine glycosylation. An ATP-binding site is contributed by 415–422 (GASGSGKS). Residue Asn469 is glycosylated (N-linked (GlcNAc...) asparagine). The disordered stretch occupies residues 635–672 (PPHARITPAVDTPASPQHRLSEKTGSIYGQGESEAADK). 6 helical membrane passes run 699–719 (VTGI…SVFF), 740–760 (FWAA…GVQG), 817–839 (VFLG…SLAV), 843–865 (LTLV…LKLV), 930–950 (LSEA…ATLV), and 960–980 (FFIV…VFAF). The ABC transmembrane type-1 2 domain maps to 699-986 (VTGIASAVIS…VFAFAPDFGK (288 aa)). The ABC transporter 2 domain occupies 1021 to 1259 (VDVSNVVFYY…RGSYYDSVNL (239 aa)). Position 1056 to 1063 (1056 to 1063 (GGSGSGKS)) interacts with ATP.

Belongs to the ABC transporter superfamily. ABCB family. Multidrug resistance exporter (TC 3.A.1.201) subfamily.

It localises to the cell membrane. The enzyme catalyses ATP + H2O + xenobioticSide 1 = ADP + phosphate + xenobioticSide 2.. In terms of biological role, sirodesmin transporter that provides the dual role of sirodesmin export and self-protection. Also provides tolerance to gliotoxin. The polypeptide is Multidrug resistance protein sirA (Leptosphaeria maculans (Blackleg fungus)).